The primary structure comprises 134 residues: Cytochrome b5 (134 aa).

A2 carries the post-translational modification N-acetylalanine. K7, K10, and K19 each carry N6-acetyllysine. In terms of domain architecture, Cytochrome b5 heme-binding spans 9-85 (VKYYTLEEIQ…SKTFIIGELH (77 aa)). Residues H44 and H68 each contribute to the heme site. A helical membrane pass occupies residues 109 to 131 (WWTNWVIPAISALVVSLMYHFYT).

This sequence belongs to the cytochrome b5 family.

Its subcellular location is the endoplasmic reticulum membrane. The protein resides in the microsome membrane. The protein localises to the cytoplasm. Functionally, cytochrome b5 is a membrane-bound hemoprotein functioning as an electron carrier for several membrane-bound oxygenases. The chain is Cytochrome b5 (CYB5A) from Sus scrofa (Pig).